Here is an 80-residue protein sequence, read N- to C-terminus: Large ribosomal subunit protein bL31 (80 aa).

Cysteine 16, cysteine 18, cysteine 38, and cysteine 41 together coordinate Zn(2+).

The protein belongs to the bacterial ribosomal protein bL31 family. Type A subfamily. In terms of assembly, part of the 50S ribosomal subunit. Requires Zn(2+) as cofactor.

In terms of biological role, binds the 23S rRNA. This chain is Large ribosomal subunit protein bL31, found in Rhodococcus jostii (strain RHA1).